Here is a 46-residue protein sequence, read N- to C-terminus: Small, acid-soluble spore protein J (46 aa).

Residues 24 to 46 (EDAGSALKDDPLQEAVQKKKNNR) are disordered.

The protein resides in the spore core. In Bacillus subtilis (strain 168), this protein is Small, acid-soluble spore protein J (sspJ).